The following is a 224-amino-acid chain: Cytidylate kinase (224 aa).

An ATP-binding site is contributed by 12 to 20; it reads GPAGAGKST.

The protein belongs to the cytidylate kinase family. Type 1 subfamily.

The protein localises to the cytoplasm. It catalyses the reaction CMP + ATP = CDP + ADP. It carries out the reaction dCMP + ATP = dCDP + ADP. This chain is Cytidylate kinase, found in Caldanaerobacter subterraneus subsp. tengcongensis (strain DSM 15242 / JCM 11007 / NBRC 100824 / MB4) (Thermoanaerobacter tengcongensis).